Consider the following 502-residue polypeptide: Maturase K (502 aa).

The protein belongs to the intron maturase 2 family. MatK subfamily.

Its subcellular location is the plastid. The protein localises to the chloroplast. Usually encoded in the trnK tRNA gene intron. Probably assists in splicing its own and other chloroplast group II introns. The protein is Maturase K of Tilia americana (American basswood).